A 159-amino-acid polypeptide reads, in one-letter code: MSDTAETQEAQTQEAQTPQLSMQRVFLKDISFESPRSPMIFQEEWKPEVGLELNTKSRQVGENVYEVVLEITVTVKNNGNTGYLVQVQQGGLFVISGLDDQQLHHALGAFCPATLFPYARENIDAVVVKGSFPAIMLAPINFDALYIESLQKQQAETTQ.

It belongs to the SecB family. Homotetramer, a dimer of dimers. One homotetramer interacts with 1 SecA dimer.

It localises to the cytoplasm. In terms of biological role, one of the proteins required for the normal export of preproteins out of the cell cytoplasm. It is a molecular chaperone that binds to a subset of precursor proteins, maintaining them in a translocation-competent state. It also specifically binds to its receptor SecA. The protein is Protein-export protein SecB of Marinomonas sp. (strain MWYL1).